The following is a 176-amino-acid chain: Flavodoxin 1 (176 aa).

The Flavodoxin-like domain occupies 4-165; the sequence is HGIFFGSDTG…RVEKWVKQIS (162 aa).

It belongs to the flavodoxin family. FMN is required as a cofactor.

Low-potential electron donor to a number of redox enzymes. The sequence is that of Flavodoxin 1 (fldA) from Shigella flexneri.